A 187-amino-acid polypeptide reads, in one-letter code: MSETNPNQTKPPATGYQSTEEMVAAQGAYESDALSRAQADLAELQAKSAELADQYLRAKAEADNARRRAEDEISKARKFAVEAFAESLLPVADSLEAGLIIKDATIDHLREGTQATLRQLLAALERNKVIPINPQPGTTKFDPHQHQAISVVPSEFDANIVVTVLQKGYAIADRVLRPALVTVAAPK.

It belongs to the GrpE family. In terms of assembly, homodimer.

Its subcellular location is the cytoplasm. Its function is as follows. Participates actively in the response to hyperosmotic and heat shock by preventing the aggregation of stress-denatured proteins, in association with DnaK and GrpE. It is the nucleotide exchange factor for DnaK and may function as a thermosensor. Unfolded proteins bind initially to DnaJ; upon interaction with the DnaJ-bound protein, DnaK hydrolyzes its bound ATP, resulting in the formation of a stable complex. GrpE releases ADP from DnaK; ATP binding to DnaK triggers the release of the substrate protein, thus completing the reaction cycle. Several rounds of ATP-dependent interactions between DnaJ, DnaK and GrpE are required for fully efficient folding. The chain is Protein GrpE from Albidiferax ferrireducens (strain ATCC BAA-621 / DSM 15236 / T118) (Rhodoferax ferrireducens).